We begin with the raw amino-acid sequence, 428 residues long: Flotillin-1 (428 aa).

Phosphoserine is present on residues serine 19, serine 163, and serine 385. Threonine 387 is subject to Phosphothreonine.

Belongs to the band 7/mec-2 family. Flotillin subfamily. In terms of assembly, heterooligomeric complex of flotillin-1 and flotillin-2 and caveolin-1 and caveolin-2. Interacts with ECPAS. High expression in brain, white adipose tissue, heart muscle, skeletal muscle and lung. Low expression in spleen, liver and testis.

The protein resides in the cell membrane. It localises to the endosome. It is found in the membrane. Its subcellular location is the caveola. The protein localises to the melanosome. The protein resides in the membrane raft. Functionally, may act as a scaffolding protein within caveolar membranes, functionally participating in formation of caveolae or caveolae-like vesicles. This is Flotillin-1 (Flot1) from Mus musculus (Mouse).